A 527-amino-acid chain; its full sequence is Bifunctional purine biosynthesis protein PurH (527 aa).

Residues 1–149 (MASDFLPVRR…KNFARVAVAT (149 aa)) form the MGS-like domain.

Belongs to the PurH family.

It carries out the reaction (6R)-10-formyltetrahydrofolate + 5-amino-1-(5-phospho-beta-D-ribosyl)imidazole-4-carboxamide = 5-formamido-1-(5-phospho-D-ribosyl)imidazole-4-carboxamide + (6S)-5,6,7,8-tetrahydrofolate. It catalyses the reaction IMP + H2O = 5-formamido-1-(5-phospho-D-ribosyl)imidazole-4-carboxamide. Its pathway is purine metabolism; IMP biosynthesis via de novo pathway; 5-formamido-1-(5-phospho-D-ribosyl)imidazole-4-carboxamide from 5-amino-1-(5-phospho-D-ribosyl)imidazole-4-carboxamide (10-formyl THF route): step 1/1. It participates in purine metabolism; IMP biosynthesis via de novo pathway; IMP from 5-formamido-1-(5-phospho-D-ribosyl)imidazole-4-carboxamide: step 1/1. In Xanthomonas campestris pv. campestris (strain 8004), this protein is Bifunctional purine biosynthesis protein PurH.